A 367-amino-acid polypeptide reads, in one-letter code: Homoserine O-acetyltransferase (367 aa).

An AB hydrolase-1 domain is found at 44–350; it reads NAIMVTHAWT…AYGHDAFLLE (307 aa). The Nucleophile role is filled by serine 150. Residue arginine 217 coordinates substrate. Residues aspartate 311 and histidine 344 contribute to the active site. Aspartate 345 is a binding site for substrate.

This sequence belongs to the AB hydrolase superfamily. MetX family. Homodimer.

It is found in the cytoplasm. The enzyme catalyses L-homoserine + acetyl-CoA = O-acetyl-L-homoserine + CoA. The protein operates within amino-acid biosynthesis; L-methionine biosynthesis via de novo pathway; O-acetyl-L-homoserine from L-homoserine: step 1/1. Transfers an acetyl group from acetyl-CoA to L-homoserine, forming acetyl-L-homoserine. In Geotalea daltonii (strain DSM 22248 / JCM 15807 / FRC-32) (Geobacter daltonii), this protein is Homoserine O-acetyltransferase.